We begin with the raw amino-acid sequence, 376 residues long: tRNA pseudouridine synthase C (376 aa).

Residue Asp-168 is part of the active site.

It in the C-terminal section; belongs to the pseudouridine synthase RluA family. This sequence to E.coli YqcC in the N-terminal section.

It carries out the reaction uridine(65) in tRNA = pseudouridine(65) in tRNA. In terms of biological role, responsible for synthesis of pseudouridine from uracil-65 in transfer RNAs. This is tRNA pseudouridine synthase C (truC) from Pectobacterium carotovorum subsp. carotovorum (Erwinia carotovora subsp. carotovora).